The following is a 652-amino-acid chain: Anaphase-promoting complex subunit 4 (652 aa).

As to quaternary structure, the APC/C is composed of at least 13 subunits that stay tightly associated throughout the cell cycle: APC1, APC2, APC4, APC5, APC9, APC11, CDC16, CDC23, CDC26, CDC27, DOC1, MND2 and SWM1.

Its subcellular location is the cytoplasm. It is found in the nucleus. Its pathway is protein modification; protein ubiquitination. Functionally, component of the anaphase promoting complex/cyclosome (APC/C), a cell cycle-regulated E3 ubiquitin-protein ligase complex that controls progression through mitosis and the G1 phase of the cell cycle. The APC/C is thought to confer substrate specificity and, in the presence of ubiquitin-conjugating E2 enzymes, it catalyzes the formation of protein-ubiquitin conjugates that are subsequently degraded by the 26S proteasome. In early mitosis, the APC/C is activated by CDC20 and targets securin PDS1, the B-type cyclin CLB5, and other anaphase inhibitory proteins for proteolysis, thereby triggering the separation of sister chromatids at the metaphase-to-anaphase transition. In late mitosis and in G1, degradation of CLB5 allows activation of the APC/C by CDH1, which is needed to destroy CDC20 and the B-type cyclin CLB2 to allow exit from mitosis and creating the low CDK state necessary for cytokinesis and for reforming prereplicative complexes in G1 prior to another round of replication. This Saccharomyces cerevisiae (strain ATCC 204508 / S288c) (Baker's yeast) protein is Anaphase-promoting complex subunit 4 (APC4).